A 614-amino-acid chain; its full sequence is Vitamin B12 transporter BtuB (614 aa).

The signal sequence occupies residues 1-20; that stretch reads MIKKASLLTACSVTAFSAWA. The TonB box signature appears at 26–33; the sequence is DTLVVTAN. Residues 38–152 enclose the TBDR plug domain; the sequence is PRSTVLAPTT…IGGVVNIITT (115 aa). Cyanocob(III)alamin contacts are provided by residues leucine 83, serine 85, asparagine 92, and 110–111; that span reads VS. One can recognise a TBDR beta-barrel domain in the interval 155–614; that stretch reads HPGTEISAGW…EYTLXGSYTF (460 aa). Beta stranded transmembrane passes span 158–165, 169–178, and 184–195; these read TEISAGWG, YQNYDVSTQQ, and TRVTLLGDYAHT. Positions 199, 211, 213, and 215 each coordinate Ca(2+). 2 consecutive transmembrane segments (beta stranded) span residues 217–227 and 232–248; these read FLSKTLYGALE and DAWSGFVRGYGYDNRTN. Residues tyrosine 249 and aspartate 250 each coordinate Ca(2+). Alanine 251 contacts cyanocob(III)alamin. Aspartate 261 is a Ca(2+) binding site. Beta stranded transmembrane passes span 263–277, 279–296, 309–325, 328–337, 353–369, 371–381, 385–400, 403–417, 434–443, 449–458, 473–490, 494–509, 517–529, and 535–550; these read RKLYSQSWDAGLRYN, ELIKSQLITSYSHSKDYN, TLDEMKQYTVQWANNII, HGNIGAGVDW, YDQRNTGIYLTGLQQVG, FTFEGAGRSDD, FGRHGTWQTSAGWEFI, YRFIASYGTSYKAPN, KSKQWEGAFE, VNWRISGYRN, YYNEGKARIKGVEATANF, PLTHTVSYDYVDARNA, RRAKQQVKYQLDW, and DWGITYQYLGTRYDKD. A cyanocob(III)alamin-binding site is contributed by threonine 309. Arginine 517 is a cyanocob(III)alamin binding site. A cyanocob(III)alamin-binding site is contributed by tyrosine 551. Transmembrane regions (beta stranded) follow at residues 558–572, 585–596, and 602–614; these read TVKMGGVSLWDLAVA, IANLFDKDYETV, and AGREYTLXGSYTF. Positions 597 to 614 match the TonB C-terminal box motif; it reads YGYQTAGREYTLXGSYTF.

This sequence belongs to the TonB-dependent receptor family. BtuB (TC 1.B.14.3.1) subfamily.

Its subcellular location is the cell outer membrane. Its function is as follows. Involved in the active translocation of vitamin B12 (cyanocobalamin) across the outer membrane to the periplasmic space. It derives its energy for transport by interacting with the trans-periplasmic membrane protein TonB. This chain is Vitamin B12 transporter BtuB, found in Escherichia coli O6:H1 (strain CFT073 / ATCC 700928 / UPEC).